Consider the following 403-residue polypeptide: Sorting nexin-32 (403 aa).

In terms of domain architecture, PX spans 20–168 (LQGDSSLQVE…VFLEYGQDLS (149 aa)). Residues 258–335 (NQLRTSFLKL…KARTRNREVR (78 aa)) adopt a coiled-coil conformation.

The protein belongs to the sorting nexin family.

May be involved in several stages of intracellular trafficking. In Homo sapiens (Human), this protein is Sorting nexin-32 (SNX32).